Here is a 42-residue protein sequence, read N- to C-terminus: Delta-hexatoxin-Hv1a (42 aa).

4 disulfides stabilise this stretch: Cys-1–Cys-15, Cys-8–Cys-20, Cys-14–Cys-31, and Cys-16–Cys-42.

Belongs to the neurotoxin 06 (delta-actx) family. In terms of tissue distribution, expressed by the venom gland.

The protein resides in the secreted. In terms of biological role, inhibits tetrodotoxin-sensitive voltage-gated sodium channels (Nav) by binding to site 3. Slows the inactivation, and causes a prolongation of action potential duration resulting in repetitive firing in autonomic and motor nerve fibers. Does not depolarize the resting potential. Does not affect tetrodotoxin-resistant sodium channels. This lethal neurotoxin is active on both insect and mammalian voltage-gated sodium channels. Pan-neuronal expression in Drosophila is lethal but flies engineered to express the toxin only in pacemaker neurons have profound defects in circadian rhythm but a normal lifespan. This chain is Delta-hexatoxin-Hv1a, found in Hadronyche versuta (Blue mountains funnel-web spider).